Reading from the N-terminus, the 244-residue chain is 5-oxoprolinase subunit A (244 aa).

This sequence belongs to the LamB/PxpA family. In terms of assembly, forms a complex composed of PxpA, PxpB and PxpC.

The catalysed reaction is 5-oxo-L-proline + ATP + 2 H2O = L-glutamate + ADP + phosphate + H(+). In terms of biological role, catalyzes the cleavage of 5-oxoproline to form L-glutamate coupled to the hydrolysis of ATP to ADP and inorganic phosphate. The protein is 5-oxoprolinase subunit A of Salmonella arizonae (strain ATCC BAA-731 / CDC346-86 / RSK2980).